Reading from the N-terminus, the 291-residue chain is BTB/POZ domain-containing protein 19 (291 aa).

One can recognise a BTB domain in the interval 29-98 (SDVCFVVGQE…LYTNSVKLYR (70 aa)). A BACK domain is found at 134 to 234 (CEALQVAVTF…LALLAPAELS (101 aa)).

The chain is BTB/POZ domain-containing protein 19 (BTBD19) from Homo sapiens (Human).